Here is a 294-residue protein sequence, read N- to C-terminus: Peroxidase-like protein 3 (294 aa).

An N-linked (GlcNAc...) asparagine glycan is attached at asparagine 129.

It belongs to the peroxidase family. Component of the acid-insoluble and acid-soluble organic matrix of calcified layers of the shell (at protein level).

It is found in the secreted. The protein is Peroxidase-like protein 3 of Lottia gigantea (Giant owl limpet).